Consider the following 272-residue polypeptide: Dioscorin DB3L (272 aa).

The signal sequence occupies residues 1–25 (MSSSTLFHLFLLSSLLFSCLSNARP). The Alpha-carbonic anhydrase domain occupies 28–263 (DDFSYIEGSP…LKFRTIFFYP (236 aa)). Cys53 and Cys213 form a disulfide bridge.

The protein belongs to the alpha-class carbonic anhydrase family. Homodimer; disulfide-linked. Post-translationally, not glycosylated. As to expression, expressed in tuber (at protein level).

Loss of hemagglutinating activity by EDTA treatment. The activity is fully recovered by the addition of 5 mM Ca(2+) ions, but not with Mg(2+) and Mn 2(+). Hemagglutination activity is inhibited by maltose and its derivatives, with maltopentaose and maltohexaose being the best inhibitors followed by maltose and iso maltose. Not inhibited by glycoproteins. In terms of biological role, maltose-binding lectin. No affinity is detected toward glucose. Has hemagglutinating activity against rabbit erythrocytes at 3.9 ug/ml. No carbonate dehydratase or trypsin inhibitor activity detected by measuring the hydrolysis of 4-nitrophenyl acetate or the inhibition of bovine trypsin-catalyzed hydrolysis of N-benzoyl-L-arginine ethyl ester, respectively. The chain is Dioscorin DB3L from Dioscorea polystachya (Chinese yam).